The primary structure comprises 40 residues: Chaperonin HSP60, mitochondrial (40 aa).

It belongs to the chaperonin (HSP60) family.

The protein resides in the mitochondrion. In terms of biological role, implicated in mitochondrial protein import and macromolecular assembly. May facilitate the correct folding of imported proteins. May also prevent misfolding and promote the refolding and proper assembly of unfolded polypeptides generated under stress conditions in the mitochondrial matrix. The protein is Chaperonin HSP60, mitochondrial of Solanum tuberosum (Potato).